The sequence spans 74 residues: Exodeoxyribonuclease 7 small subunit (74 aa).

It belongs to the XseB family. Heterooligomer composed of large and small subunits.

The protein resides in the cytoplasm. The enzyme catalyses Exonucleolytic cleavage in either 5'- to 3'- or 3'- to 5'-direction to yield nucleoside 5'-phosphates.. Bidirectionally degrades single-stranded DNA into large acid-insoluble oligonucleotides, which are then degraded further into small acid-soluble oligonucleotides. In Neisseria gonorrhoeae (strain ATCC 700825 / FA 1090), this protein is Exodeoxyribonuclease 7 small subunit.